We begin with the raw amino-acid sequence, 568 residues long: Glucose-6-phosphate isomerase, cytosolic 1 (568 aa).

Catalysis depends on glutamate 360, which acts as the Proton donor. Catalysis depends on residues histidine 391 and lysine 516.

It belongs to the GPI family. As to quaternary structure, homodimer.

It is found in the cytoplasm. It carries out the reaction alpha-D-glucose 6-phosphate = beta-D-fructose 6-phosphate. It participates in carbohydrate degradation; glycolysis; D-glyceraldehyde 3-phosphate and glycerone phosphate from D-glucose: step 2/4. This is Glucose-6-phosphate isomerase, cytosolic 1 (PGIC1) from Clarkia williamsonii.